The primary structure comprises 360 residues: Coiled-coil domain-containing protein 86 (360 aa).

Residues 1-12 (MDTPLRRSRRLG) are compositionally biased toward basic residues. 2 disordered regions span residues 1 to 314 (MDTP…ENER) and 328 to 360 (LKRA…AAKI). Phosphoserine is present on residues Ser-21, Ser-24, Ser-47, Ser-50, and Ser-58. Residue Thr-65 is modified to Phosphothreonine. A phosphoserine mark is found at Ser-66, Ser-69, Ser-80, Ser-91, Ser-102, Ser-110, Ser-113, and Ser-128. Over residues 66 to 83 (SPGSPRLQQGSGLESPQG) the composition is skewed to polar residues. Over residues 153-164 (QLPPVPGSPEPY) the composition is skewed to pro residues. A phosphoserine mark is found at Ser-188, Ser-217, and Ser-218. Over residues 238–254 (GKPKSGRVWKDRSKKRF) the composition is skewed to basic residues. Residues 272-323 (KERQERKLAKDFARHLEEEKERRRQEKKQRRAENLKRRLENERKAEVVQVIR) adopt a coiled-coil conformation. 2 stretches are compositionally biased toward basic and acidic residues: residues 273 to 295 (ERQE…ERRR) and 302 to 314 (RAEN…ENER). Arg-342 carries the post-translational modification Citrulline.

In terms of processing, citrullinated by PADI4.

Its subcellular location is the nucleus. The protein resides in the chromosome. It localises to the nucleolus. In terms of biological role, required for proper chromosome segregation during mitosis and error-free mitotic progression. This is Coiled-coil domain-containing protein 86 from Pongo abelii (Sumatran orangutan).